Consider the following 96-residue polypeptide: Co-chaperonin GroES (96 aa).

It belongs to the GroES chaperonin family. Heptamer of 7 subunits arranged in a ring. Interacts with the chaperonin GroEL.

Its subcellular location is the cytoplasm. In terms of biological role, together with the chaperonin GroEL, plays an essential role in assisting protein folding. The GroEL-GroES system forms a nano-cage that allows encapsulation of the non-native substrate proteins and provides a physical environment optimized to promote and accelerate protein folding. GroES binds to the apical surface of the GroEL ring, thereby capping the opening of the GroEL channel. This is Co-chaperonin GroES from Polaromonas naphthalenivorans (strain CJ2).